The sequence spans 161 residues: Ribosomal RNA large subunit methyltransferase H (161 aa).

S-adenosyl-L-methionine is bound by residues Leu78, Gly110, and 129–134 (LSRLTF).

Belongs to the RNA methyltransferase RlmH family. Homodimer.

It is found in the cytoplasm. The enzyme catalyses pseudouridine(1915) in 23S rRNA + S-adenosyl-L-methionine = N(3)-methylpseudouridine(1915) in 23S rRNA + S-adenosyl-L-homocysteine + H(+). In terms of biological role, specifically methylates the pseudouridine at position 1915 (m3Psi1915) in 23S rRNA. The sequence is that of Ribosomal RNA large subunit methyltransferase H from Heliobacterium modesticaldum (strain ATCC 51547 / Ice1).